Consider the following 67-residue polypeptide: Ceratotoxin-C (67 aa).

Positions 1 to 23 (MANIKAVFLICIVAFIAFHCVVA) are cleaved as a signal peptide. Positions 24–35 (EPTAEDSVVVKR) are excised as a propeptide.

As to quaternary structure, homomer of four to six subunits.

The protein localises to the secreted. Female-specific peptides with potent activity against Gram-positive and Gram-negative bacteria. They have as well hemolytic activity. The sequence is that of Ceratotoxin-C (CTXC1) from Ceratitis capitata (Mediterranean fruit fly).